The primary structure comprises 306 residues: uncharacterized protein (306 aa).

This is an uncharacterized protein from Haemophilus influenzae (strain ATCC 51907 / DSM 11121 / KW20 / Rd).